A 500-amino-acid chain; its full sequence is Maturase K (500 aa).

This sequence belongs to the intron maturase 2 family. MatK subfamily.

It is found in the plastid. It localises to the chloroplast. Functionally, usually encoded in the trnK tRNA gene intron. Probably assists in splicing its own and other chloroplast group II introns. The chain is Maturase K from Fragaria vesca (Woodland strawberry).